The following is a 237-amino-acid chain: Sugar fermentation stimulation protein homolog (237 aa).

It belongs to the SfsA family.

This Pseudomonas savastanoi pv. phaseolicola (strain 1448A / Race 6) (Pseudomonas syringae pv. phaseolicola (strain 1448A / Race 6)) protein is Sugar fermentation stimulation protein homolog.